The sequence spans 351 residues: Small ribosomal subunit biogenesis GTPase RsgA 1 (351 aa).

The CP-type G domain maps to 100–258 (LRTDAQIVAS…IIDTPGMREL (159 aa)). Residues 148-151 (SKVD) and 200-208 (GSSGAGKST) contribute to the GTP site. 4 residues coordinate Zn(2+): Cys282, Cys287, His289, and Cys295.

It belongs to the TRAFAC class YlqF/YawG GTPase family. RsgA subfamily. In terms of assembly, monomer. Associates with 30S ribosomal subunit, binds 16S rRNA. Zn(2+) is required as a cofactor.

It localises to the cytoplasm. Functionally, one of several proteins that assist in the late maturation steps of the functional core of the 30S ribosomal subunit. Helps release RbfA from mature subunits. May play a role in the assembly of ribosomal proteins into the subunit. Circularly permuted GTPase that catalyzes slow GTP hydrolysis, GTPase activity is stimulated by the 30S ribosomal subunit. In Oceanobacillus iheyensis (strain DSM 14371 / CIP 107618 / JCM 11309 / KCTC 3954 / HTE831), this protein is Small ribosomal subunit biogenesis GTPase RsgA 1.